The following is a 341-amino-acid chain: Probable alcohol acetyltransferase (341 aa).

A mitochondrion-targeting transit peptide spans 1–40; sequence MFASRILRNSAQTLKTELPHKETIKMAYDLHKPRSTAIRH. Residues 48–301 enclose the AB hydrolase-1 domain; the sequence is PILFLHGIFG…NSNHDILDQR (254 aa). Active-site charge relay system residues include Ser121, Asp145, and His295.

Belongs to the AB hydrolase superfamily.

It is found in the mitochondrion. Functionally, probable alcohol acetyltransferase that uses acetyl-CoA to synthesize acetate esters from various alcohols. Not involved in the synthesis of ethyl acetate. In Wickerhamomyces anomalus (strain ATCC 58044 / CBS 1984 / NCYC 433 / NRRL Y-366-8) (Yeast), this protein is Probable alcohol acetyltransferase (EAT2).